The sequence spans 271 residues: MASENMTPQDYIGHHLNNLQLDLRTFSLVDPQNPPATFWTINIDSMFFSVVLGLLFLVLFRSVAKKATSGVPGKFQTAIELVIGFVNGSVKDMYHGKSKLIAPLALTIFVWVFLMNLMDLLPIDLLPYIAEHVLGLPALRVVPSADVNVTLSMALGVFILILFYNIKMKGIGGFTKELTLQPFNHWAFIPVNLILEGVSLLSKPVSLGLRLFGNMYAGELIFILIAGLLPWWSQWILNVPWAIFHILIITLQAFIFMVLTIVYLSMASEEH.

Helical transmembrane passes span 40–60 (TINI…LVLF), 100–120 (LIAP…LMDL), 146–166 (DVNV…FYNI), 220–240 (LIFI…LNVP), and 242–262 (AIFH…LTIV).

This sequence belongs to the ATPase A chain family. F-type ATPases have 2 components, CF(1) - the catalytic core - and CF(0) - the membrane proton channel. CF(1) has five subunits: alpha(3), beta(3), gamma(1), delta(1), epsilon(1). CF(0) has three main subunits: a(1), b(2) and c(9-12). The alpha and beta chains form an alternating ring which encloses part of the gamma chain. CF(1) is attached to CF(0) by a central stalk formed by the gamma and epsilon chains, while a peripheral stalk is formed by the delta and b chains.

The protein resides in the cell inner membrane. Functionally, key component of the proton channel; it plays a direct role in the translocation of protons across the membrane. In Shigella flexneri, this protein is ATP synthase subunit a.